Consider the following 87-residue polypeptide: U1-theraphotoxin-Ct1a (87 aa).

The signal sequence occupies residues 1-23 (MKTFTLIAILTCAVLVIFHAAAA). Positions 24 to 48 (EELEVQDVIQPEDTLTGLATLDEDR) are excised as a propeptide.

It belongs to the neurotoxin 12 (Hwtx-2) family. 03 (juruin) subfamily. Post-translationally, contains 3 disulfide bonds. Two different connectivities are observed in similar proteins (C1-C3, C2-C5, C4-C6 or C1-C4, C2-C5, C3-C6). As to expression, expressed by the venom gland.

It localises to the secreted. Functionally, this toxin causes paralysis and death to sheep blowflies. It may inhibit voltage-gated calcium channels. This is U1-theraphotoxin-Ct1a from Coremiocnemis tropix (Australian tarantula spider).